We begin with the raw amino-acid sequence, 104 residues long: Gastrin (104 aa).

Positions 1–21 (MQRLCVCVLILALALTAFSEA) are cleaved as a signal peptide. Residues 22–49 (SWKPRSQLQDAPSGPGANGGLEPHWLNR) form a disordered region. Positions 22-58 (SWKPRSQLQDAPSGPGANGGLEPHWLNRLGPASHHRW) are excised as a propeptide. Residues glutamine 59 and glutamine 76 each carry the pyrrolidone carboxylic acid modification. Tyrosine 87 is subject to Sulfotyrosine. A Phenylalanine amide modification is found at phenylalanine 92. Serine 96 carries the post-translational modification Phosphoserine. The propeptide occupies 96-104 (SAEDGDQHP).

This sequence belongs to the gastrin/cholecystokinin family.

It is found in the secreted. Its function is as follows. Gastrin stimulates the stomach mucosa to produce and secrete hydrochloric acid and the pancreas to secrete its digestive enzymes. It also stimulates smooth muscle contraction and increases blood circulation and water secretion in the stomach and intestine. This Felis catus (Cat) protein is Gastrin (GAST).